Reading from the N-terminus, the 217-residue chain is MARKGILGTKLGMTQVFDENNKVVPVTVVKAGPNVVTRIRTPERDGYSAVQLAYGEISPRKVNKPVTGQYTAAGVNPRRHLAELRLDDAEAVTEYEVGQELTAEIFADGSYVDVTGTSKGKGFAGTMKRHGFSGQGASHGAQAVHRRPGSIGGCATPARVFKGTRMAGRMGNDRVTVQNLLVHKVDAEQGVLLIKGAVPGRTGGLVMVRSAIKRGEK.

This sequence belongs to the universal ribosomal protein uL3 family. In terms of assembly, part of the 50S ribosomal subunit. Forms a cluster with proteins L14 and L19.

Functionally, one of the primary rRNA binding proteins, it binds directly near the 3'-end of the 23S rRNA, where it nucleates assembly of the 50S subunit. The polypeptide is Large ribosomal subunit protein uL3 (Mycobacterium marinum (strain ATCC BAA-535 / M)).